Reading from the N-terminus, the 458-residue chain is Ig mu chain C region secreted form (458 aa).

Residues 1–106 are CH1; it reads VSLSSPTLYP…SNRDLRVSFP (106 aa). A disulfide bridge links C28 with C90. N-linked (GlcNAc...) asparagine glycans are attached at residues N46 and N114. Residues 107-222 are CH2; the sequence is VDSELPPNVS…VSMSSECSTT (116 aa). Residues C137 and C200 are joined by a disulfide bond. Residues N212, N261, N277, and N284 are each glycosylated (N-linked (GlcNAc...) asparagine). The interval 223 to 327 is CH3; it reads PSPGIQVFPI…PLKHTISKSR (105 aa). 2 disulfide bridges follow: C249-C308 and C356-C418. The tract at residues 328–458 is CH4; it reads EVAKHPPAVY…IMSDTASTCY (131 aa). N-linked (GlcNAc...) asparagine glycosylation is present at N445.

Its subcellular location is the secreted. The sequence is that of Ig mu chain C region secreted form from Oryctolagus cuniculus (Rabbit).